Consider the following 145-residue polypeptide: Putative pre-16S rRNA nuclease (145 aa).

The protein belongs to the YqgF nuclease family.

The protein localises to the cytoplasm. Functionally, could be a nuclease involved in processing of the 5'-end of pre-16S rRNA. The sequence is that of Putative pre-16S rRNA nuclease from Sulfurihydrogenibium sp. (strain YO3AOP1).